The primary structure comprises 523 residues: MDSSYSFALGTSSSILPKLSFRNVENRFYGEKNNNNGLCKRFGSDLGSKKFRNQKFKHGVVYAVATSDNPKKAMTVKTSMFERRKVDPQNVAAIILGGGNGAKLFPLTMRAATPAVPVGGCYRLIDIPMSNCINSCINKIFVLTQFNSASLNRHLARTYFGNGINFGGGFVEVLAATQTPGEAGKKWFQGTADAVRKFLWVFEDAKNRNIENILILSGDHLYRMNYMDFVQSHVDSNADITLSCAPVSESRASNFGLVKIDRGGRVIHFSEKPTGVDLKSMQTDTTMLGLSHQEATDSPYIASMGVYCFKTEALLNLLTRQYPSSNDFGSEVIPAAIRDHDVQGYIFRDYWEDIGTIKTFYEANLALVEERPKFEFYDPETPFYTSPRFLPPTKAEKCRMVDSIISHGCFLRECSVQRSIIGERSRLDYGVELQDTLMLGADYYQTESEIASLLAEGKVPIGIGKDTKIRKCIIDKNAKIGKNVIIMNKGDVQEADRPEEGFYIRSGITVIVEKATIQDGTVI.

Belongs to the bacterial/plant glucose-1-phosphate adenylyltransferase family. In terms of assembly, heterotetramer.

The protein localises to the plastid. It is found in the chloroplast. The catalysed reaction is alpha-D-glucose 1-phosphate + ATP + H(+) = ADP-alpha-D-glucose + diphosphate. Its pathway is glycan biosynthesis; starch biosynthesis. With respect to regulation, activated by 3'phosphoglycerate, inhibited by orthophosphate. Allosteric regulation. In terms of biological role, this protein plays a role in synthesis of starch. It catalyzes the synthesis of the activated glycosyl donor, ADP-glucose from Glc-1-P and ATP. This chain is Probable glucose-1-phosphate adenylyltransferase large subunit, chloroplastic, found in Arabidopsis thaliana (Mouse-ear cress).